The chain runs to 1854 residues: Dystrophin, isoform D (1854 aa).

Disordered stretches follow at residues 1–65 (MTTT…PIYA), 84–161 (GSTT…YEMP), 240–352 (QSPT…MSPA), 516–548 (LKPT…PTPS), 595–650 (TPGG…TSES), 716–740 (VMSK…PSTA), 783–830 (LKLQ…STTP), and 1012–1036 (VSDT…EQSR). Low complexity-rich tracts occupy residues 11-37 (QRQQ…QQHQ) and 84-96 (GSTT…LQSS). The segment covering 143 to 157 (GLSSAQPATSASSGN) has biased composition (polar residues). Residues 276-296 (QQQQQQQQAGINGQINGNGNQ) show a composition bias toward low complexity. Polar residues-rich tracts occupy residues 331 to 345 (TLSR…SSAD) and 518 to 536 (PTST…SNTA). The segment covering 595 to 606 (TPGGGVVGGQAA) has biased composition (gly residues). A compositionally biased stretch (polar residues) spans 716–727 (VMSKSNSSLGSV). Composition is skewed to low complexity over residues 728-740 (TTPS…PSTA) and 783-814 (LKLQ…QQIQ). The span at 815–830 (NGFASDDNSSSCSTTP) shows a compositional bias: polar residues. Spectrin repeat units lie at residues 936–1069 (EHWN…RLDE) and 1072–1176 (TKMR…VLCQ). The segment at 1179-1209 (AQQTHENGDDGRTTSNSGTIGPLPNLGQSVK) is disordered. The region spanning 1206 to 1239 (QSVKPPWERATTAANVPYYIDHERETTHWDHPEM) is the WW domain. Residues 1464–1520 (KHQAKCNICKEYPIVGFRYRCLKCFNFDMCQKCFFFGRNAKNHKLTHPMHEYCTTTT) form a ZZ-type zinc finger. Residues Cys1469, Cys1472, Cys1484, Cys1487, Cys1493, Cys1496, His1506, and His1510 each coordinate Zn(2+). A Phosphoserine modification is found at Ser1564. Disordered regions lie at residues 1673 to 1701 (EQSG…GEQG) and 1744 to 1854 (DEPN…ELQK). 2 stretches are compositionally biased toward polar residues: residues 1682-1694 (NGMQ…MTGL) and 1765-1796 (ALNS…QQNG). Residues 1815 to 1826 (QELESINDDLED) are compositionally biased toward acidic residues. A compositionally biased stretch (low complexity) spans 1827–1845 (SSSSNTTNTTTTTTTTATT).

Component of the dystrophin associated protein complex (DAPC). Interacts with Dg, via the Dg WW domain binding sites. In terms of tissue distribution, during embryogenesis and in third instar larvae, expression is seen in pericardial cells of the dorsal vessel and in the ventral nerve cord. Expression is absent from both the embryonic and larval musculature.

The protein localises to the cell membrane. It localises to the sarcolemma. Its subcellular location is the cytoplasm. It is found in the cytoskeleton. Functionally, required for the maintenance of appropriate synaptic retrograde communication and the stabilization of muscle cell architecture or physiology. May play a role in anchoring the cytoskeleton to the plasma membrane. The protein is Dystrophin, isoform D (Dys) of Drosophila melanogaster (Fruit fly).